The primary structure comprises 157 residues: 3-hydroxyacyl-[acyl-carrier-protein] dehydratase FabZ (157 aa).

Residue H58 is part of the active site.

It belongs to the thioester dehydratase family. FabZ subfamily.

It localises to the cytoplasm. It catalyses the reaction a (3R)-hydroxyacyl-[ACP] = a (2E)-enoyl-[ACP] + H2O. Its function is as follows. Involved in unsaturated fatty acids biosynthesis. Catalyzes the dehydration of short chain beta-hydroxyacyl-ACPs and long chain saturated and unsaturated beta-hydroxyacyl-ACPs. This is 3-hydroxyacyl-[acyl-carrier-protein] dehydratase FabZ from Rhizobium rhizogenes (strain K84 / ATCC BAA-868) (Agrobacterium radiobacter).